The primary structure comprises 403 residues: S-adenosylmethionine synthase (403 aa).

H17 is a binding site for ATP. A Mg(2+)-binding site is contributed by D19. Position 45 (E45) interacts with K(+). L-methionine is bound by residues E58 and Q104. Residues 104–114 form a flexible loop region; that stretch reads QSPDIAQGVDT. Residues 179 to 181, 250 to 251, D259, 265 to 266, A282, and K286 each bind ATP; these read DGK, KF, and RK. D259 is a binding site for L-methionine. K290 serves as a coordination point for L-methionine.

Belongs to the AdoMet synthase family. As to quaternary structure, homotetramer; dimer of dimers. Mg(2+) is required as a cofactor. K(+) serves as cofactor.

Its subcellular location is the cytoplasm. The enzyme catalyses L-methionine + ATP + H2O = S-adenosyl-L-methionine + phosphate + diphosphate. Its pathway is amino-acid biosynthesis; S-adenosyl-L-methionine biosynthesis; S-adenosyl-L-methionine from L-methionine: step 1/1. Catalyzes the formation of S-adenosylmethionine (AdoMet) from methionine and ATP. The overall synthetic reaction is composed of two sequential steps, AdoMet formation and the subsequent tripolyphosphate hydrolysis which occurs prior to release of AdoMet from the enzyme. The protein is S-adenosylmethionine synthase of Mycobacterium bovis (strain ATCC BAA-935 / AF2122/97).